The primary structure comprises 617 residues: ATP-dependent RNA helicase DBP1 (617 aa).

The tract at residues 1-90 is disordered; the sequence is MADLPQKVSN…TSANYNRGGS (90 aa). Over residues 7-17 the composition is skewed to polar residues; that stretch reads KVSNLSINNKE. A compositionally biased stretch (basic and acidic residues) spans 38 to 58; that stretch reads PSFERSTPKQEDKVTGGDFFR. The segment covering 79-90 has biased composition (polar residues); that stretch reads GGTSANYNRGGS. A Q motif motif is present at residues 154-182; it reads LDFSSPPLDELLMENIKLASFTKPTPVQK. Residues 185 to 374 form the Helicase ATP-binding domain; the sequence is IPIVTKGRDL…RDFLDNYIFL (190 aa). 198-205 is a binding site for ATP; it reads AQTGSGKT. The DEAD box motif lies at 318 to 321; the sequence is DEAD. Residues 385–545 enclose the Helicase C-terminal domain; sequence NITQRILYVD…EVPTFLSDLS (161 aa). The interval 542–617 is disordered; that stretch reads SDLSRQNSRG…GYGNSNASWW (76 aa). Positions 580-594 are enriched in polar residues; it reads FGSTRPRNTGTSNWG.

This sequence belongs to the DEAD box helicase family. DDX3/DED1 subfamily.

It is found in the cytoplasm. The catalysed reaction is ATP + H2O = ADP + phosphate + H(+). Functionally, ATP-binding RNA helicase involved in translation initiation. Remodels RNA in response to ADP and ATP concentrations by facilitating disruption, but also formation of RNA duplexes. Redundant to DED1, may be required in conditions in which DED1 expression is decreased. This is ATP-dependent RNA helicase DBP1 (DBP1) from Saccharomyces cerevisiae (strain ATCC 204508 / S288c) (Baker's yeast).